Consider the following 260-residue polypeptide: Cytosolic Fe-S cluster assembly factor Nubp2 homolog (260 aa).

Residue 14 to 21 coordinates ATP; sequence GKGGVGKS. Positions 188 and 191 each coordinate [4Fe-4S] cluster.

The protein belongs to the Mrp/NBP35 ATP-binding proteins family. NUBP2/CFD1 subfamily. Heterotetramer of 2 Nubp1 and 2 Nubp2 chains. Requires [4Fe-4S] cluster as cofactor.

It localises to the cytoplasm. In terms of biological role, component of the cytosolic iron-sulfur (Fe/S) protein assembly (CIA) machinery. Required for maturation of extramitochondrial Fe-S proteins. The Nubp1-Nubp2 heterotetramer forms a Fe-S scaffold complex, mediating the de novo assembly of an Fe-S cluster and its transfer to target apoproteins. The polypeptide is Cytosolic Fe-S cluster assembly factor Nubp2 homolog (Drosophila melanogaster (Fruit fly)).